We begin with the raw amino-acid sequence, 331 residues long: 6-phosphogluconolactonase (331 aa).

Residue Lys-287 is modified to N6-acetyllysine.

The protein belongs to the cycloisomerase 2 family.

The enzyme catalyses 6-phospho-D-glucono-1,5-lactone + H2O = 6-phospho-D-gluconate + H(+). It functions in the pathway carbohydrate degradation; pentose phosphate pathway; D-ribulose 5-phosphate from D-glucose 6-phosphate (oxidative stage): step 2/3. Catalyzes the hydrolysis of 6-phosphogluconolactone to 6-phosphogluconate. This is 6-phosphogluconolactonase from Shigella boydii serotype 18 (strain CDC 3083-94 / BS512).